The chain runs to 316 residues: Phosphate acetyltransferase (316 aa).

The protein belongs to the phosphate acetyltransferase and butyryltransferase family.

The protein resides in the cytoplasm. It carries out the reaction acetyl-CoA + phosphate = acetyl phosphate + CoA. It participates in metabolic intermediate biosynthesis; acetyl-CoA biosynthesis; acetyl-CoA from acetate: step 2/2. The polypeptide is Phosphate acetyltransferase (pta) (Rhizobium meliloti (Ensifer meliloti)).